A 58-amino-acid polypeptide reads, in one-letter code: Large ribosomal subunit protein eL24 (58 aa).

Cys6, Cys9, Cys32, and Cys36 together coordinate Zn(2+). The C4-type zinc-finger motif lies at 6-36; that stretch reads CSFCGYDIEPGTGKMYVRRDGRVFYFCSGKC.

This sequence belongs to the eukaryotic ribosomal protein eL24 family. In terms of assembly, part of the 50S ribosomal subunit. Forms a cluster with proteins L3 and L14. Zn(2+) is required as a cofactor.

In terms of biological role, binds to the 23S rRNA. The sequence is that of Large ribosomal subunit protein eL24 from Archaeoglobus fulgidus (strain ATCC 49558 / DSM 4304 / JCM 9628 / NBRC 100126 / VC-16).